The following is a 448-amino-acid chain: MSHRYIPLTEQDKNEMLNSIGAKSISELFDDIPTDILLKRNLNIAESEAETILLRRLNRLAAKNTTKETHATFLGAGVYDHYTPAVVDAMISRSEFYTAYTPYQPEISQGELQAIFEFQTLICELTDMDVANSSMYDGMTSFAEACILALSHTKKNKIVVSSGLHYQALQILHTYAKTRDEFEIIEVDLKGTITDLEKLEQLIDDNTAAVAVQYPNFYGSIEDLEQINNYIKDKKALFIVYANPLSLGLLTPPGTFGADIVVGDTQPFGIPTQFGGPHCGYFATTKKLMRKVPGRLVGQTQDDEGNRGFVLTLQAREQHIRRDKATSNICSNQALNALASSIAMSALGKQGIYEIAVQNLKNANYAKNKFEEHGFEVLKAQSFNEFVVKFNQPIKNINLKLAEYGYIGGFDLGEVSDDFKNHMLVAVTELRSKDEIDDFVTKAGELND.

Belongs to the GcvP family. N-terminal subunit subfamily. The glycine cleavage system is composed of four proteins: P, T, L and H. In this organism, the P 'protein' is a heterodimer of two subunits.

It catalyses the reaction N(6)-[(R)-lipoyl]-L-lysyl-[glycine-cleavage complex H protein] + glycine + H(+) = N(6)-[(R)-S(8)-aminomethyldihydrolipoyl]-L-lysyl-[glycine-cleavage complex H protein] + CO2. The glycine cleavage system catalyzes the degradation of glycine. The P protein binds the alpha-amino group of glycine through its pyridoxal phosphate cofactor; CO(2) is released and the remaining methylamine moiety is then transferred to the lipoamide cofactor of the H protein. The chain is Probable glycine dehydrogenase (decarboxylating) subunit 1 from Staphylococcus epidermidis (strain ATCC 35984 / DSM 28319 / BCRC 17069 / CCUG 31568 / BM 3577 / RP62A).